A 144-amino-acid polypeptide reads, in one-letter code: Mannitol-specific phosphotransferase enzyme IIA component (144 aa).

Residues E3–A142 enclose the PTS EIIA type-2 domain. H63 functions as the Tele-phosphohistidine intermediate in the catalytic mechanism. H63 is modified (phosphohistidine; by HPr).

In terms of assembly, homodimer or homotrimer. Seems to be a monomer when not phosphorylated.

It is found in the cytoplasm. Functionally, the phosphoenolpyruvate-dependent sugar phosphotransferase system (sugar PTS), a major carbohydrate active transport system, catalyzes the phosphorylation of incoming sugar substrates concomitantly with their translocation across the cell membrane. The enzyme II CmtAB PTS system is involved in D-mannitol transport. This is Mannitol-specific phosphotransferase enzyme IIA component (mtlF) from Staphylococcus aureus (strain MRSA252).